The primary structure comprises 139 residues: Small integral membrane protein 34 (139 aa).

A helical transmembrane segment spans residues 46–66; sequence GTSAAWYILTIIGIYAVIFVF.

Its subcellular location is the membrane. This Homo sapiens (Human) protein is Small integral membrane protein 34.